The chain runs to 290 residues: Aquaporin-12 (290 aa).

2 helical membrane-spanning segments follow: residues 1–21 (MASL…CEVA) and 67–87 (FGPD…GVTF). Residues 93–95 (NPT) carry the NPA 1 motif. 3 helical membrane-spanning segments follow: residues 112-138 (LLKL…WELS), 158-178 (SVLQ…LSLL), and 191-211 (ALAL…SAFF). The NPA 2 motif lies at 212–214 (NPA). A helical transmembrane segment spans residues 228–248 (LLEYAHVYCLGPVAGMILAVL). Residues 271–290 (RTPRGKLSPGSVDAKMHKGE) form a disordered region.

It belongs to the MIP/aquaporin (TC 1.A.8) family. AQP11/AQP12 subfamily. Restricted to pancreatic acinar cells.

Its subcellular location is the membrane. In terms of biological role, aquaporins facilitate the transport of water and small neutral solutes across cell membranes. This chain is Aquaporin-12 (Aqp12), found in Mus musculus (Mouse).